Here is a 487-residue protein sequence, read N- to C-terminus: Probable cytochrome P450 516A1 (487 aa).

The helical transmembrane segment at 1–21 threads the bilayer; it reads MIILLLSIIIFILYIVKIFKN. C434 serves as a coordination point for heme.

This sequence belongs to the cytochrome P450 family. Requires heme as cofactor.

The protein resides in the membrane. This Dictyostelium discoideum (Social amoeba) protein is Probable cytochrome P450 516A1 (cyp516A1).